The chain runs to 247 residues: MSVVSMKQLLEAGVHFGHQAKRWNPKMAKYIFTERNGIHVIDLHKSLKKIEEAYEEMRKIAEDGGKVLFVGTKKQAQEAIKEQAERSGMYYVNSRWLGGMLTNFSTIKKRIERMKELEKLDAEGILDTDYTKKEAAEFRKELSKLSKNLSGIRDMEKVPDAIYVVDVKMEELPVKEAHLLGIPVFAMIDTNVDPDLITYPIPANDDAIRSVKLITSVIANAIVEGNQGIENVEPQSEEVNVEEGSAE.

It belongs to the universal ribosomal protein uS2 family.

The chain is Small ribosomal subunit protein uS2 from Fusobacterium nucleatum subsp. nucleatum (strain ATCC 25586 / DSM 15643 / BCRC 10681 / CIP 101130 / JCM 8532 / KCTC 2640 / LMG 13131 / VPI 4355).